The following is a 197-amino-acid chain: Protein RmlC homolog (197 aa).

Catalysis depends on His76, which acts as the Proton acceptor. The active-site Proton donor is Tyr140.

Its function is as follows. Could catalyze a 3,5-epimerization. This chain is Protein RmlC homolog (rfbC), found in Streptococcus pyogenes serotype M6 (strain ATCC BAA-946 / MGAS10394).